A 232-amino-acid chain; its full sequence is tRNA (guanine-N(7)-)-methyltransferase (232 aa).

Glu38, Asp63, Glu90, and Asp113 together coordinate S-adenosyl-L-methionine. Residue Asp113 is part of the active site. Residues Lys117 and Asp149 each contribute to the substrate site.

The protein belongs to the class I-like SAM-binding methyltransferase superfamily. TrmB family.

The enzyme catalyses guanosine(46) in tRNA + S-adenosyl-L-methionine = N(7)-methylguanosine(46) in tRNA + S-adenosyl-L-homocysteine. The protein operates within tRNA modification; N(7)-methylguanine-tRNA biosynthesis. In terms of biological role, catalyzes the formation of N(7)-methylguanine at position 46 (m7G46) in tRNA. The chain is tRNA (guanine-N(7)-)-methyltransferase from Syntrophotalea carbinolica (strain DSM 2380 / NBRC 103641 / GraBd1) (Pelobacter carbinolicus).